Here is a 109-residue protein sequence, read N- to C-terminus: Large ribosomal subunit protein uL22 (109 aa).

It belongs to the universal ribosomal protein uL22 family. In terms of assembly, part of the 50S ribosomal subunit.

In terms of biological role, this protein binds specifically to 23S rRNA; its binding is stimulated by other ribosomal proteins, e.g. L4, L17, and L20. It is important during the early stages of 50S assembly. It makes multiple contacts with different domains of the 23S rRNA in the assembled 50S subunit and ribosome. The globular domain of the protein is located near the polypeptide exit tunnel on the outside of the subunit, while an extended beta-hairpin is found that lines the wall of the exit tunnel in the center of the 70S ribosome. This chain is Large ribosomal subunit protein uL22, found in Dehalococcoides mccartyi (strain ATCC BAA-2100 / JCM 16839 / KCTC 5957 / BAV1).